Consider the following 226-residue polypeptide: Ribonuclease 3 (226 aa).

Residues 6-128 enclose the RNase III domain; it reads INRLQRKLGY…LIGGVFLDSN (123 aa). Glu41 serves as a coordination point for Mg(2+). Residue Asp45 is part of the active site. Mg(2+) is bound by residues Asp114 and Glu117. Glu117 is a catalytic residue. The 71-residue stretch at 155 to 225 folds into the DRBM domain; it reads DPKTRLQEYL…AEQVLKKLEL (71 aa).

It belongs to the ribonuclease III family. Homodimer. It depends on Mg(2+) as a cofactor.

It localises to the cytoplasm. The catalysed reaction is Endonucleolytic cleavage to 5'-phosphomonoester.. Its function is as follows. Digests double-stranded RNA. Involved in the processing of primary rRNA transcript to yield the immediate precursors to the large and small rRNAs (23S and 16S). Processes some mRNAs, and tRNAs when they are encoded in the rRNA operon. Processes pre-crRNA and tracrRNA of type II CRISPR loci if present in the organism. This chain is Ribonuclease 3, found in Salmonella choleraesuis (strain SC-B67).